Here is a 736-residue protein sequence, read N- to C-terminus: MAVSSSSDVIVLSVGIILAALYLFREQIFSAAKPKTVQVPSSKAAAGGNGNPRDFIAKMKEGKKRIVIFYGSQTGTAEEYAIRLAKEAKSKFGLASLVCDPEEYDFENLDQVPEDCCVFFVMATYGEGEPTDNAVQLCQNLSDESFEFSNGEHKLPGLKYVIFGLGNKTYEHYNLISRNVDRDLQKMGAIRIGERGEGDDDKSMEEDYLEWKDGMWEAFAKAMNVEEGQGGDSPDFVVTEVFDHPEEKVYLGELSARALTRTKGIHDAKNPYPAPIIAAKELFAPGSDRNCVHIELSTESSGITYQHGDHVGVWPSNADKEVDRLLYALGLHEKKDTVINIESLDPALAKVPFPVPTTYATVLRHYIDISALAGRQILGVLAKFAPNPEAEAVLKDLNSNKEHYQNIVANGCMKLGEVLQYAAGNDLHADPTASNTTAWKIPFDIIVSSIPRLQPRYYSISSSPKLYPNAIHATVVVLKYKSEKAPRVEERWIYGVGSNFLLNLKYASHHDKAATLVSDDSPSEPSIVSHYPTYSIEGPRGAYKQGDVVKVPIHVRRSTFRLPTNPKSPVIMIGPGTGVAPFRGFVQERVAMARRTIEKHGPEGLADWGPIRLYYGCRRSDQDFLYKDEWPEYAKELHGKFIMRCAFSREPPYKPDGSKIYVQDLIWEDAEQIADAILNGKGYVYICGDAKSMSKSVEETLCRILGEAKGGSAEVEGAAELKLLKERNRLLLDVWS.

A topological domain (lumenal) is located at residue M1. A helical transmembrane segment spans residues 2 to 24; the sequence is AVSSSSDVIVLSVGIILAALYLF. Over 25 to 736 the chain is Cytoplasmic; sequence REQIFSAAKP…RNRLLLDVWS (712 aa). Positions 66 to 216 constitute a Flavodoxin-like domain; the sequence is IVIFYGSQTG…DYLEWKDGMW (151 aa). Residues 72–77, 123–126, 165–174, and D200 contribute to the FMN site; these read SQTGTA, ATYG, and LGNKTYEHYN. In terms of domain architecture, FAD-binding FR-type spans 269–546; the sequence is KNPYPAPIIA…EGPRGAYKQG (278 aa). R289 is an NADP(+) binding site. FAD contacts are provided by residues 456–459, 474–476, Y480, and 495–498; these read RYYS, TVV, and GVGS. NADP(+)-binding positions include T577, 648 to 649, and 659 to 663; these read SR and KIYVQ. W735 contributes to the FAD binding site.

It belongs to the NADPH--cytochrome P450 reductase family. The protein in the N-terminal section; belongs to the flavodoxin family. This sequence in the C-terminal section; belongs to the flavoprotein pyridine nucleotide cytochrome reductase family. FAD is required as a cofactor. FMN serves as cofactor.

It is found in the endoplasmic reticulum membrane. It localises to the mitochondrion outer membrane. The protein localises to the cell membrane. The catalysed reaction is 2 oxidized [cytochrome P450] + NADPH = 2 reduced [cytochrome P450] + NADP(+) + H(+). In terms of biological role, this enzyme is required for electron transfer from NADP to cytochrome P450 in microsomes. It can also provide electron transfer to heme oxygenase and cytochrome B5. Involved in ergosterol biosynthesis. This is NADPH--cytochrome P450 reductase (CPR) from Phanerodontia chrysosporium (White-rot fungus).